We begin with the raw amino-acid sequence, 139 residues long: Probable DNA-binding protein (139 aa).

The interval 97–139 (DEPSREASPDLGAAGAELEDESAQAGAVQGPETLRSQVLRART) is disordered.

This chain is Probable DNA-binding protein, found in Homo sapiens (Human).